Here is a 342-residue protein sequence, read N- to C-terminus: UDP-3-O-acylglucosamine N-acyltransferase (342 aa).

The active-site Proton acceptor is histidine 241.

This sequence belongs to the transferase hexapeptide repeat family. LpxD subfamily. As to quaternary structure, homotrimer.

It catalyses the reaction a UDP-3-O-[(3R)-3-hydroxyacyl]-alpha-D-glucosamine + a (3R)-hydroxyacyl-[ACP] = a UDP-2-N,3-O-bis[(3R)-3-hydroxyacyl]-alpha-D-glucosamine + holo-[ACP] + H(+). It functions in the pathway bacterial outer membrane biogenesis; LPS lipid A biosynthesis. In terms of biological role, catalyzes the N-acylation of UDP-3-O-acylglucosamine using 3-hydroxyacyl-ACP as the acyl donor. Is involved in the biosynthesis of lipid A, a phosphorylated glycolipid that anchors the lipopolysaccharide to the outer membrane of the cell. The chain is UDP-3-O-acylglucosamine N-acyltransferase from Pasteurella multocida (strain Pm70).